Consider the following 344-residue polypeptide: Mitochondrial mRNA pseudouridine synthase Rpusd3 (344 aa).

Residues 1-36 (MGALRVLRYVSMIWRPELGSCARQRDAGFGTEARRP) constitute a mitochondrion transit peptide. The segment at 25 to 53 (RDAGFGTEARRPSQPHRSSKHKDLVEDQP) is disordered.

This sequence belongs to the pseudouridine synthase RluA family. As to quaternary structure, forms a regulatory protein-RNA complex, consisting of RCC1L, NGRN, RPUSD3, RPUSD4, TRUB2, FASTKD2 and 16S mt-rRNA.

The protein resides in the mitochondrion matrix. The catalysed reaction is a uridine in mRNA = a pseudouridine in mRNA. In terms of biological role, catalyzes uridine to pseudouridine isomerization (pseudouridylation) of specific mitochondrial mRNAs (mt-mRNAs), a post-transcriptional modification necessary for their translation. Acts at position 390 in COXI mt-mRNA and at position 697-699 in mitochondrial COXIII mt-mRNA. As a component of a functional protein-RNA module, consisting of RCC1L, NGRN, RPUSD3, RPUSD4, TRUB2, FASTKD2 and 16S mitochondrial ribosomal RNA (16S mt-rRNA), controls 16S mt-rRNA abundance and may play a role in mitochondrial ribosome biogenesis. This chain is Mitochondrial mRNA pseudouridine synthase Rpusd3 (Rpusd3), found in Mus musculus (Mouse).